The sequence spans 193 residues: Probable GTP-binding protein EngB (193 aa).

Positions 22-193 (SFPEIVFAGR…LAHFDQYICQ (172 aa)) constitute an EngB-type G domain. Residues 30–37 (GRSNVGKS), 57–61 (GKTRL), 75–78 (DLPG), 142–145 (TKYD), and 172–174 (YSS) each bind GTP. Mg(2+)-binding residues include Ser-37 and Thr-59.

This sequence belongs to the TRAFAC class TrmE-Era-EngA-EngB-Septin-like GTPase superfamily. EngB GTPase family. It depends on Mg(2+) as a cofactor.

Functionally, necessary for normal cell division and for the maintenance of normal septation. The protein is Probable GTP-binding protein EngB of Pelodictyon phaeoclathratiforme (strain DSM 5477 / BU-1).